Reading from the N-terminus, the 559-residue chain is Neutral amino acid transporter 9 (559 aa).

The Cytoplasmic portion of the chain corresponds to 1–118; the sequence is MANVDSDSRH…YTEGYRKNTS (118 aa). Residues 119–139 form a helical membrane-spanning segment; the sequence is LVTIFMIWNTMMGTSILSIPW. Positions 128–133 are important for arginine binding and amino acid transport; it reads TMMGTS. Residue Ser133 coordinates arginine. At 140 to 145 the chain is on the lumenal side; that stretch reads GIKQAG. Residues 146-166 form a helical membrane-spanning segment; that stretch reads FTTGMCVIVLMGLLTLYCCYR. Residues 167 to 197 lie on the Cytoplasmic side of the membrane; that stretch reads VVKSRSMIVTSDTTTWEYPDVCKHYFGSFGQ. A helical membrane pass occupies residues 198–224; that stretch reads WSSLLFSLVSLIGAMIVYWVLMSNFLF. Over 225-281 the chain is Lumenal; that stretch reads NTGKFIFNFIHHINDTDTVLSTNNSSPVICPSAGSGHPDNSSMIFYNSDTEVRLFER. N-linked (GlcNAc...) asparagine glycosylation is found at Asn238, Asn247, and Asn264. An intrachain disulfide couples Cys254 to Cys422. A helical membrane pass occupies residues 282–298; the sequence is WWDKSKTVPFYLIGLLL. The Cytoplasmic portion of the chain corresponds to 299–307; sequence PLLNFKSPS. A helical membrane pass occupies residues 308–332; the sequence is FFSKFNILGTVSVLYLIFIVTLKAI. The Lumenal portion of the chain corresponds to 333–354; sequence RLGFHLEFHWFAPTEFFVPEIR. The chain crosses the membrane as a helical span at residues 355 to 375; it reads AQFPQLTGVLTLAFFIHNCII. Residues 376 to 392 are Cytoplasmic-facing; it reads TLLKNNKNQENNVRDLC. A helical membrane pass occupies residues 393–413; it reads IAYMLVTLTYLYIGVLVFASF. The Lumenal segment spans residues 414-435; that stretch reads PSPPLPKDCIEQNFLDNFPSSD. A helical membrane pass occupies residues 436 to 456; that stretch reads TLSFIARICLLFQMMTVYPLL. Residues 442–452 carry the CARC motif motif; that stretch reads RICLLFQMMTV. Residues 455-461 carry the CRAC motif motif; the sequence is LLGYLAR. The Cytoplasmic portion of the chain corresponds to 457–477; that stretch reads GYLARVQLLGHIFGDIYPSIF. A helical membrane pass occupies residues 478-498; it reads HVLILNLIIVGAGVTMACFYP. Residues 499 to 505 are Lumenal-facing; it reads NIGGIIR. The chain crosses the membrane as a helical span at residues 506–526; it reads YSGAACGLAFVFIYPSLIYIL. At 527–538 the chain is on the cytoplasmic side; the sequence is SQHQEERLTWPK. A helical membrane pass occupies residues 539 to 559; sequence LVFHIIIIILGLANLIAQFFM.

Belongs to the amino acid/polyamine transporter 2 family. SLC38A9 subfamily. In terms of assembly, associated component of the Ragulator complex (composed of LAMTOR1, LAMTOR2, LAMTOR3, LAMTOR4 and LAMTOR5). Associated component of the Rag GTPases heterodimers (composed of RRAGA, RRAGB, RRAGC and RRAGD); this interaction is independent of the Ragulator complex but depends on the nucleotide loading state of the Rag GTPase heterodimer. Interacts with TM4SF5. Interacts with NPC1; this interaction inhibits cholesterol-mediated mTORC1 activation via its sterol transport activity. Post-translationally, glycosylated.

The protein resides in the lysosome membrane. The protein localises to the late endosome membrane. It catalyses the reaction L-leucine(in) = L-leucine(out). The enzyme catalyses L-tyrosine(in) = L-tyrosine(out). It carries out the reaction L-glutamine(out) = L-glutamine(in). The catalysed reaction is L-asparagine(out) = L-asparagine(in). Its function is as follows. Lysosomal amino acid transporter involved in the activation of mTORC1 in response to amino acid levels. Probably acts as an amino acid sensor of the Rag GTPases and Ragulator complexes, 2 complexes involved in amino acid sensing and activation of mTORC1, a signaling complex promoting cell growth in response to growth factors, energy levels, and amino acids. Following activation by amino acids, the Ragulator and Rag GTPases function as a scaffold recruiting mTORC1 to lysosomes where it is in turn activated. SLC38A9 mediates transport of amino acids with low capacity and specificity with a slight preference for polar amino acids. Acts as an arginine sensor. Following activation by arginine binding, mediates transport of L-glutamine, leucine and tyrosine with high efficiency, and is required for the efficient utilization of these amino acids after lysosomal protein degradation. However, the transport mechanism is not well defined and the role of sodium is not clear. Can disassemble the lysosomal folliculin complex (LFC), and thereby triggers GAP activity of FLCN:FNIP2 toward RRAGC. Acts as an cholesterol sensor that conveys increases in lysosomal cholesterol, leading to lysosomal recruitment and activation of mTORC1 via the Rag GTPases. Guanine exchange factor (GEF) that, upon arginine binding, stimulates GDP release from RRAGA and therefore activates the Rag GTPase heterodimer and the mTORC1 pathway in response to nutrient sufficiency. The sequence is that of Neutral amino acid transporter 9 from Rattus norvegicus (Rat).